Reading from the N-terminus, the 184-residue chain is Thylakoid membrane protein slr0575 (184 aa).

The next 2 helical transmembrane spans lie at 5–25 and 31–51; these read ISLAAVGLTVGGILTITGFVA and ATLNLAGFFYGIPLVLGGLAL.

It localises to the cellular thylakoid membrane. In Synechocystis sp. (strain ATCC 27184 / PCC 6803 / Kazusa), this protein is Thylakoid membrane protein slr0575.